The primary structure comprises 221 residues: Flavin-dependent thymidylate synthase (221 aa).

In terms of domain architecture, ThyX spans 9–209; that stretch reads GFVKLLDHMG…PWTYESFIRY (201 aa). Residues serine 55, 78-80, and glutamate 86 contribute to the FAD site; that span reads RHR. Residues 75–78, 86–90, and arginine 148 each bind dUMP; these read QWMR and ELSGR. A ThyX motif motif is present at residues 78-88; sequence RHRIASYNELS. FAD is bound by residues 164–166 and asparagine 170; that span reads NAR. DUMP is bound at residue arginine 175. Residue arginine 175 is the Involved in ionization of N3 of dUMP, leading to its activation of the active site.

The protein belongs to the thymidylate synthase ThyX family. Homotetramer. It depends on FAD as a cofactor.

The catalysed reaction is dUMP + (6R)-5,10-methylene-5,6,7,8-tetrahydrofolate + NADPH + H(+) = dTMP + (6S)-5,6,7,8-tetrahydrofolate + NADP(+). Its pathway is pyrimidine metabolism; dTTP biosynthesis. Functionally, catalyzes the reductive methylation of 2'-deoxyuridine-5'-monophosphate (dUMP) to 2'-deoxythymidine-5'-monophosphate (dTMP) while utilizing 5,10-methylenetetrahydrofolate (mTHF) as the methyl donor, and NADPH and FADH(2) as the reductant. The sequence is that of Flavin-dependent thymidylate synthase from Pseudothermotoga lettingae (strain ATCC BAA-301 / DSM 14385 / NBRC 107922 / TMO) (Thermotoga lettingae).